A 264-amino-acid chain; its full sequence is 3-methyl-2-oxobutanoate hydroxymethyltransferase 2 (264 aa).

The Mg(2+) site is built by Asp44 and Asp83. 3-methyl-2-oxobutanoate-binding positions include 44–45, Asp83, and Lys111; that span reads DS. Glu113 lines the Mg(2+) pocket. The Proton acceptor role is filled by Glu180.

This sequence belongs to the PanB family. In terms of assembly, homodecamer; pentamer of dimers. The cofactor is Mg(2+).

It localises to the cytoplasm. It catalyses the reaction 3-methyl-2-oxobutanoate + (6R)-5,10-methylene-5,6,7,8-tetrahydrofolate + H2O = 2-dehydropantoate + (6S)-5,6,7,8-tetrahydrofolate. Its pathway is cofactor biosynthesis; (R)-pantothenate biosynthesis; (R)-pantoate from 3-methyl-2-oxobutanoate: step 1/2. In terms of biological role, catalyzes the reversible reaction in which hydroxymethyl group from 5,10-methylenetetrahydrofolate is transferred onto alpha-ketoisovalerate to form ketopantoate. This is 3-methyl-2-oxobutanoate hydroxymethyltransferase 2 from Hahella chejuensis (strain KCTC 2396).